The sequence spans 100 residues: Putative membrane protein insertion efficiency factor (100 aa).

The protein belongs to the UPF0161 family.

It is found in the cell membrane. Its function is as follows. Could be involved in insertion of integral membrane proteins into the membrane. The protein is Putative membrane protein insertion efficiency factor of Enterococcus faecalis (strain ATCC 700802 / V583).